A 374-amino-acid polypeptide reads, in one-letter code: Anhydro-N-acetylmuramic acid kinase (374 aa).

12 to 19 (GTSLDGID) contributes to the ATP binding site.

This sequence belongs to the anhydro-N-acetylmuramic acid kinase family.

The catalysed reaction is 1,6-anhydro-N-acetyl-beta-muramate + ATP + H2O = N-acetyl-D-muramate 6-phosphate + ADP + H(+). The protein operates within amino-sugar metabolism; 1,6-anhydro-N-acetylmuramate degradation. Its pathway is cell wall biogenesis; peptidoglycan recycling. Its function is as follows. Catalyzes the specific phosphorylation of 1,6-anhydro-N-acetylmuramic acid (anhMurNAc) with the simultaneous cleavage of the 1,6-anhydro ring, generating MurNAc-6-P. Is required for the utilization of anhMurNAc either imported from the medium or derived from its own cell wall murein, and thus plays a role in cell wall recycling. This Sodalis glossinidius (strain morsitans) protein is Anhydro-N-acetylmuramic acid kinase.